The primary structure comprises 654 residues: Probable Xaa-Pro aminopeptidase P (654 aa).

Asp449, Asp460, Glu558, and Glu572 together coordinate Mn(2+).

The protein belongs to the peptidase M24B family. The cofactor is Mn(2+).

The catalysed reaction is Release of any N-terminal amino acid, including proline, that is linked to proline, even from a dipeptide or tripeptide.. In terms of biological role, catalyzes the removal of a penultimate prolyl residue from the N-termini of peptides. The chain is Probable Xaa-Pro aminopeptidase P (ampp) from Neosartorya fischeri (strain ATCC 1020 / DSM 3700 / CBS 544.65 / FGSC A1164 / JCM 1740 / NRRL 181 / WB 181) (Aspergillus fischerianus).